The following is a 314-amino-acid chain: CBASS oligonucleotide cyclase CdnC (314 aa).

ATP is bound at residue lysine 60. Residues aspartate 73 and aspartate 75 each coordinate Mg(2+). Residues aspartate 75, lysine 186, 197 to 199 (KSF), and asparagine 263 each bind ATP.

This sequence belongs to the CD-NTase family. C01 subfamily. In terms of assembly, forms complexes with Cap7 with 1:1 and 2:2 stoichimetry, and a 1:1:6 CdnC:Cap7:Cap6 complex. Requires Mg(2+) as cofactor.

In terms of biological role, cyclic nucleotide synthase (second messenger synthase) of a CBASS antivirus system. CBASS (cyclic oligonucleotide-based antiphage signaling system) provides immunity against bacteriophage. The CD-NTase protein synthesizes cyclic nucleotides in response to infection; these serve as specific second messenger signals. The signals activate a diverse range of effectors, leading to bacterial cell death and thus abortive phage infection. A type III CBASS system. Expression of this CBASS system (Cap18-Cap6-Cap7-CdnC-CapW-Cap17) in a susceptible E.coli (strain MG1655) confers resistance to bacteriophage P1. Probable cyclic nucleotide synthase that upon activation catalyzes the synthesis of a cyclic nucleotide. A cyclase activity for this enzyme was not identified in. The protein is CBASS oligonucleotide cyclase CdnC of Escherichia coli (strain KTE188).